The chain runs to 306 residues: MTGSSDFPVKGLRGRLTPNAPLGPRAWFRVGGPADWLFVPEDQDDLALFLREKPATMPVTVLGACSNVIIRDGGIAGTVIRLARGFADITVQGNSLIVGAAALDITVAEHAAAAGLAGLEFLAGIPGSIGGAVRMNAGAYGSDINAVFEWADILTAEGELRRLSHDELGFAYRHSELPEGSVVIRASLRGTPDNADAIRSRIADIRASREASQPVRARTGGSTFRNPDGHKAWQLIDEAGCRGLQIGDAQVSEKHCNFLLNLGQASSADLETLGETVREKVLAQSGVDLHWEIKRIGRKSEGEQTV.

The 165-residue stretch at 29–193 (RVGGPADWLF…IRASLRGTPD (165 aa)) folds into the FAD-binding PCMH-type domain. The active site involves R173. The active-site Proton donor is S222. Residue E292 is part of the active site.

It belongs to the MurB family. FAD serves as cofactor.

It localises to the cytoplasm. It catalyses the reaction UDP-N-acetyl-alpha-D-muramate + NADP(+) = UDP-N-acetyl-3-O-(1-carboxyvinyl)-alpha-D-glucosamine + NADPH + H(+). It participates in cell wall biogenesis; peptidoglycan biosynthesis. Functionally, cell wall formation. In Gluconobacter oxydans (strain 621H) (Gluconobacter suboxydans), this protein is UDP-N-acetylenolpyruvoylglucosamine reductase.